The primary structure comprises 298 residues: Elongation factor Ts (298 aa).

The interval 78–81 (TDFV) is involved in Mg(2+) ion dislocation from EF-Tu.

This sequence belongs to the EF-Ts family.

It is found in the cytoplasm. Functionally, associates with the EF-Tu.GDP complex and induces the exchange of GDP to GTP. It remains bound to the aminoacyl-tRNA.EF-Tu.GTP complex up to the GTP hydrolysis stage on the ribosome. The chain is Elongation factor Ts from Mycoplasmopsis agalactiae (strain NCTC 10123 / CIP 59.7 / PG2) (Mycoplasma agalactiae).